The primary structure comprises 208 residues: LexA repressor (208 aa).

Residues 29–49 (IREIGDSLNINSTSTVHNNIL) constitute a DNA-binding region (H-T-H motif). Residues serine 131 and lysine 168 each act as for autocatalytic cleavage activity in the active site.

The protein belongs to the peptidase S24 family. As to quaternary structure, homodimer.

The enzyme catalyses Hydrolysis of Ala-|-Gly bond in repressor LexA.. Functionally, represses a number of genes involved in the response to DNA damage (SOS response), including recA and lexA. In the presence of single-stranded DNA, RecA interacts with LexA causing an autocatalytic cleavage which disrupts the DNA-binding part of LexA, leading to derepression of the SOS regulon and eventually DNA repair. The polypeptide is LexA repressor (Finegoldia magna (strain ATCC 29328 / DSM 20472 / WAL 2508) (Peptostreptococcus magnus)).